A 995-amino-acid polypeptide reads, in one-letter code: Serine-aspartate repeat-containing protein C (995 aa).

Positions 1 to 50 (MNNKKTATNRKGMIPNRLNKFSIRKYSVGTASILVGTTLIFGLSGHEAKA) are cleaved as a signal peptide. Residues 21–32 (FSIRKYSVGTAS) carry the YSIRK-G/S signaling motif motif. The disordered stretch occupies residues 51 to 164 (AEHTNGELNQ…STTPKTTTIK (114 aa)). The ligand binding A region stretch occupies residues 51–495 (AEHTNGELNQ…GSSTANGDQK (445 aa)). The segment covering 56–71 (GELNQSKNETTAPSEN) has biased composition (polar residues). Over residues 72 to 83 (KTTKKVDSRQLK) the composition is skewed to basic and acidic residues. A compositionally biased stretch (polar residues) spans 84–155 (DNTQTATADQ…SNLTQAKDVS (72 aa)). 2 consecutive CNA-B domains span residues 496 to 606 (KYNL…YKTP) and 607 to 717 (KYSL…EEET). A disordered region spans residues 678 to 975 (TQTGTNTTED…NNSNNGTLFG (298 aa)). Composition is skewed to acidic residues over residues 685–695 (TEDDKDADGGE) and 712–934 (YYEE…DSDS). An LPXTG sorting signal motif is present at residues 958-962 (LPETG). Positions 960 to 975 (ETGSENNNSNNGTLFG) are enriched in low complexity. Thr-961 carries the post-translational modification Pentaglycyl murein peptidoglycan amidated threonine. The propeptide at 962-995 (GSENNNSNNGTLFGGLFAALGSLLLFGRRKKQNK) is removed by sortase.

The protein belongs to the serine-aspartate repeat-containing protein (SDr) family. As to quaternary structure, homodimerizes; via N2-Domain. Interacts with host NRXN1; this interaction mediates bacterial attachment to host cells.

Its subcellular location is the secreted. It is found in the cell wall. Its function is as follows. Cell surface-associated calcium-binding protein which plays an important role in adhesion and pathogenesis. Mediates interactions with components of the extracellular matrix such as host NRXN1 to promote bacterial adhesion. The protein is Serine-aspartate repeat-containing protein C (sdrC) of Staphylococcus aureus (strain NCTC 8325 / PS 47).